Reading from the N-terminus, the 336-residue chain is Dihydroorotate dehydrogenase (quinone) (336 aa).

Residues 62–66 (AGLDK) and threonine 86 each bind FMN. Lysine 66 provides a ligand contact to substrate. 111–115 (NRMGF) lines the substrate pocket. 2 residues coordinate FMN: asparagine 139 and asparagine 172. Asparagine 172 contributes to the substrate binding site. Residue serine 175 is the Nucleophile of the active site. Position 177 (asparagine 177) interacts with substrate. 2 residues coordinate FMN: lysine 217 and threonine 245. 246–247 (NT) contributes to the substrate binding site. Residues glycine 268, glycine 297, and 318–319 (YS) contribute to the FMN site.

The protein belongs to the dihydroorotate dehydrogenase family. Type 2 subfamily. As to quaternary structure, monomer. FMN serves as cofactor.

It is found in the cell membrane. It catalyses the reaction (S)-dihydroorotate + a quinone = orotate + a quinol. Its pathway is pyrimidine metabolism; UMP biosynthesis via de novo pathway; orotate from (S)-dihydroorotate (quinone route): step 1/1. Catalyzes the conversion of dihydroorotate to orotate with quinone as electron acceptor. This chain is Dihydroorotate dehydrogenase (quinone), found in Pectobacterium carotovorum subsp. carotovorum (strain PC1).